Reading from the N-terminus, the 325-residue chain is Lipoyl synthase (325 aa).

The tract at residues 1–31 is disordered; that stretch reads MASDSDLLDTKPAETRHPEKAHRPDQPTLRK. Positions 8–31 are enriched in basic and acidic residues; that stretch reads LDTKPAETRHPEKAHRPDQPTLRK. [4Fe-4S] cluster is bound by residues Cys61, Cys66, Cys72, Cys87, Cys91, Cys94, and Ser300. In terms of domain architecture, Radical SAM core spans 73-289; that stretch reads WAKKHATFMI…AEIGRAKGFL (217 aa).

The protein belongs to the radical SAM superfamily. Lipoyl synthase family. Requires [4Fe-4S] cluster as cofactor.

It is found in the cytoplasm. The catalysed reaction is [[Fe-S] cluster scaffold protein carrying a second [4Fe-4S](2+) cluster] + N(6)-octanoyl-L-lysyl-[protein] + 2 oxidized [2Fe-2S]-[ferredoxin] + 2 S-adenosyl-L-methionine + 4 H(+) = [[Fe-S] cluster scaffold protein] + N(6)-[(R)-dihydrolipoyl]-L-lysyl-[protein] + 4 Fe(3+) + 2 hydrogen sulfide + 2 5'-deoxyadenosine + 2 L-methionine + 2 reduced [2Fe-2S]-[ferredoxin]. It participates in protein modification; protein lipoylation via endogenous pathway; protein N(6)-(lipoyl)lysine from octanoyl-[acyl-carrier-protein]: step 2/2. Functionally, catalyzes the radical-mediated insertion of two sulfur atoms into the C-6 and C-8 positions of the octanoyl moiety bound to the lipoyl domains of lipoate-dependent enzymes, thereby converting the octanoylated domains into lipoylated derivatives. The sequence is that of Lipoyl synthase from Methylocella silvestris (strain DSM 15510 / CIP 108128 / LMG 27833 / NCIMB 13906 / BL2).